The primary structure comprises 151 residues: Phosphoribosyl-AMP cyclohydrolase (151 aa).

Aspartate 94 is a Mg(2+) binding site. Position 95 (cysteine 95) interacts with Zn(2+). Mg(2+) contacts are provided by aspartate 96 and aspartate 98. Residues cysteine 112 and cysteine 119 each coordinate Zn(2+).

It belongs to the PRA-CH family. As to quaternary structure, homodimer. Mg(2+) serves as cofactor. It depends on Zn(2+) as a cofactor.

It localises to the cytoplasm. The catalysed reaction is 1-(5-phospho-beta-D-ribosyl)-5'-AMP + H2O = 1-(5-phospho-beta-D-ribosyl)-5-[(5-phospho-beta-D-ribosylamino)methylideneamino]imidazole-4-carboxamide. It functions in the pathway amino-acid biosynthesis; L-histidine biosynthesis; L-histidine from 5-phospho-alpha-D-ribose 1-diphosphate: step 3/9. Its function is as follows. Catalyzes the hydrolysis of the adenine ring of phosphoribosyl-AMP. The chain is Phosphoribosyl-AMP cyclohydrolase from Rhodopseudomonas palustris (strain TIE-1).